Consider the following 326-residue polypeptide: MDQPTWKRPHRAKFAGVSDAAQQRQMPNLASIDLNLLVDLEALLQYRHITQAAQHVGRSQPAMSRALSRLRGMLKDDLLVAGSRGLVLTPLAECLTQMLPSVLDAIRQMMNLSLAPAQRRWKVTMAMPDHQAVVLLPHLLPRLHERAPHLDIVTDPLLGGALGLLEQGEIDVVVGQMGAAPLGYLRRRLYADSFTCVLRHNHPALAQEWTIEAFAALRHVAIASEPDELFGQIYDRLTKLGLQRGDPMVVSTVLTAAVLIAATDSVLVVPSRVATRVAAMLSLAVIPPPVELRPYEVALIWHERCHRDPEHRWLRGEIAAAASTAG.

The HTH lysR-type domain occupies 32 to 89 (IDLNLLVDLEALLQYRHITQAAQHVGRSQPAMSRALSRLRGMLKDDLLVAGSRGLVLT). Positions 49–68 (ITQAAQHVGRSQPAMSRALS) form a DNA-binding region, H-T-H motif.

It belongs to the LysR transcriptional regulatory family.

Acts in trans to stimulate nod gene expression via nodD3 and exo gene expression via SyrA. This chain is HTH-type transcriptional regulator SyrM (syrM), found in Rhizobium meliloti (strain 1021) (Ensifer meliloti).